A 42-amino-acid chain; its full sequence is Daisho1 (42 aa).

The first 20 residues, 1-20, serve as a signal peptide directing secretion; it reads MKFFQAAALLLAMFAALANA. Residues 21-26 constitute a propeptide, removed by a dipeptidylpeptidase; sequence EPVPQP. The residue at position 41 (threonine 41) is a Threonine amide.

As to expression, hemolymph (at protein level).

It localises to the secreted. Its function is as follows. Peptide which plays a role in the humoral immune response to a subset of filamentous fungi, including F.oxysporum and F.verticillioides. This Drosophila melanogaster (Fruit fly) protein is Daisho1.